The primary structure comprises 464 residues: tRNA modification GTPase MnmE (464 aa).

(6S)-5-formyl-5,6,7,8-tetrahydrofolate is bound by residues Arg25, Glu87, and Lys130. Positions 226–386 (GLSVVLAGQP…LREELLRIAG (161 aa)) constitute a TrmE-type G domain. Position 236 (Asn236) interacts with K(+). GTP is bound by residues 236 to 241 (NVGKSS), 255 to 261 (TPIAGTT), and 280 to 283 (DTAG). Position 240 (Ser240) interacts with Mg(2+). Residues Thr255, Ile257, and Thr260 each coordinate K(+). Thr261 contacts Mg(2+). Residue Lys464 coordinates (6S)-5-formyl-5,6,7,8-tetrahydrofolate.

The protein belongs to the TRAFAC class TrmE-Era-EngA-EngB-Septin-like GTPase superfamily. TrmE GTPase family. Homodimer. Heterotetramer of two MnmE and two MnmG subunits. K(+) is required as a cofactor.

Its subcellular location is the cytoplasm. In terms of biological role, exhibits a very high intrinsic GTPase hydrolysis rate. Involved in the addition of a carboxymethylaminomethyl (cmnm) group at the wobble position (U34) of certain tRNAs, forming tRNA-cmnm(5)s(2)U34. The protein is tRNA modification GTPase MnmE of Paraburkholderia xenovorans (strain LB400).